The chain runs to 276 residues: RNA-binding protein pno-1 (276 aa).

Disordered regions lie at residues 1–30 and 62–101; these read MATS…VPST and DVVM…SRVV. Positions 8–27 are enriched in acidic residues; it reads FDDEFPMEEGMPELLDDEDV. The KH domain occupies 197 to 249; the sequence is GDHVSRAIGRIAGKDGRTKLVIENTTKTRIVVANTKIHILGAYQNLKLARNAV.

Belongs to the PNO1 family. As to quaternary structure, part of the small subunit (SSU) processome, composed of more than 70 proteins and the RNA chaperone small nucleolar RNA (snoRNA) U3.

It localises to the nucleus. It is found in the nucleolus. Functionally, part of the small subunit (SSU) processome, first precursor of the small eukaryotic ribosomal subunit. During the assembly of the SSU processome in the nucleolus, many ribosome biogenesis factors, an RNA chaperone and ribosomal proteins associate with the nascent pre-rRNA and work in concert to generate RNA folding, modifications, rearrangements and cleavage as well as targeted degradation of pre-ribosomal RNA by the RNA exosome. Positively regulates dimethylation of two adjacent adenosines in the loop of a conserved hairpin near the 3'-end of 18S rRNA. This chain is RNA-binding protein pno-1, found in Caenorhabditis briggsae.